Reading from the N-terminus, the 255-residue chain is Proteasome subunit alpha (255 aa).

The interval 228–255 (LLASPAGTSGPTGEPGPAGTAATDGGDL) is disordered. Positions 232–255 (PAGTSGPTGEPGPAGTAATDGGDL) are enriched in low complexity.

It belongs to the peptidase T1A family. As to quaternary structure, the 20S proteasome core is composed of 14 alpha and 14 beta subunits that assemble into four stacked heptameric rings, resulting in a barrel-shaped structure. The two inner rings, each composed of seven catalytic beta subunits, are sandwiched by two outer rings, each composed of seven alpha subunits. The catalytic chamber with the active sites is on the inside of the barrel. Has a gated structure, the ends of the cylinder being occluded by the N-termini of the alpha-subunits. Is capped by the proteasome-associated ATPase, ARC.

It localises to the cytoplasm. Its pathway is protein degradation; proteasomal Pup-dependent pathway. Its activity is regulated as follows. The formation of the proteasomal ATPase ARC-20S proteasome complex, likely via the docking of the C-termini of ARC into the intersubunit pockets in the alpha-rings, may trigger opening of the gate for substrate entry. Interconversion between the open-gate and close-gate conformations leads to a dynamic regulation of the 20S proteasome proteolysis activity. Functionally, component of the proteasome core, a large protease complex with broad specificity involved in protein degradation. This Sanguibacter keddieii (strain ATCC 51767 / DSM 10542 / NCFB 3025 / ST-74) protein is Proteasome subunit alpha.